The sequence spans 191 residues: Chromobox protein homolog 5 (191 aa).

The interval 1-21 (MGKKTKRTADSSSSEDEEEYV) is disordered. Residues S11, S12, S13, and S14 each carry the phosphoserine modification. The Chromo 1 domain occupies 20–78 (YVVEKVLDRRMVKGQVEYLLKWKGFSEEHNTWEPEKNLDCPELISEFMKKYKKMKEGEN). Residue K32 forms a Glycyl lysine isopeptide (Lys-Gly) (interchain with G-Cter in SUMO2) linkage. K40 carries the N6-acetyllysine modification. Residues 70–117 (YKKMKEGENNKPREKSEGNKRKSSFSNSADDIKSKKKREQSNDIARGF) are disordered. The span at 73–89 (MKEGENNKPREKSEGNK) shows a compositional bias: basic and acidic residues. Residue K91 forms a Glycyl lysine isopeptide (Lys-Gly) (interchain with G-Cter in SUMO2) linkage. Residues S92, S93, S95, and S97 each carry the phosphoserine modification. Glycyl lysine isopeptide (Lys-Gly) (interchain with G-Cter in SUMO2) cross-links involve residues K102, K106, K154, and K184. In terms of domain architecture, Chromo 2; shadow subtype spans 121–179 (LEPEKIIGATDSCGDLMFLMKWKDTDEADLVLAKEANVKCPQIVIAFYEERLTWHAYPE).

Homodimer. Interacts with histone H3 methylated at 'Lys-9'. Interacts (via Chromo 2; shadow subtype domain) with the MIS12 complex subunit NSL1; the interaction is direct, involves dimeric CBX5, and occurs during interphase. Interacts with POGZ; POGZ and PXVXL motif-containing proteins such as INCENP and TRIM28 compete for interaction with CBX5. Interacts with LRIF1 (via PxVxL motif). Interacts with INCENP. Interacts with TRIM24. Interacts (via the chromoshadow domain) with ATRX; the interaction is direct. Interacts (via the chromoshadow domain) with CHAF1A; the interaction is direct. Interacts (via the chromoshadow domain) with LBR; the interaction is direct. Interacts (via the chromoshadow domain) with NIPBL; the interaction is direct. Interacts (via the chromoshadow domain) with SP100; the interaction is direct. Interacts (via the chromoshadow domain) with STAM2; the interaction is direct. Interacts (via the chromoshadow domain) with TRIM28; the interaction is direct. Interacts (via the chromoshadow domain) with CBX3; the interaction is direct. Interacts with PRR14 (via N-terminus). Interacts with RRP1B. Interacts with HNRNPU (via C-terminus); this interaction is, at least in part, RNA-dependent. Interacts with ZNF263; recruited to the SIX3 promoter along with other proteins involved in chromatin modification and transcriptional corepression where it contributes to transcriptional repression. Interacts with AURKB during mitosis. Interacts with CHAMP1. Interacts with BAHD1. Interacts with HP1BP3. Interacts with CHD3. Interacts with CHD4. Interacts with SMYD5. Interacts with KMT5B. Interacts with KMT5C. Phosphorylation of HP1 and LBR may be responsible for some of the alterations in chromatin organization and nuclear structure which occur at various times during the cell cycle. Phosphorylated during interphase and possibly hyper-phosphorylated during mitosis. Post-translationally, ubiquitinated.

It is found in the nucleus. Its subcellular location is the chromosome. The protein localises to the centromere. Its function is as follows. Component of heterochromatin that recognizes and binds histone H3 tails methylated at 'Lys-9' (H3K9me), leading to epigenetic repression. In contrast, it is excluded from chromatin when 'Tyr-41' of histone H3 is phosphorylated (H3Y41ph). May contribute to the association of heterochromatin with the inner nuclear membrane by interactions with the lamin-B receptor (LBR). Involved in the formation of kinetochore through interaction with the MIS12 complex subunit NSL1. Required for the formation of the inner centromere. In terms of biological role, component of heterochromatin that recognizes and binds histone H3 tails methylated at 'Lys-9' (H3K9me), leading to epigenetic repression. In contrast, it is excluded from chromatin when 'Tyr-41' of histone H3 is phosphorylated (H3Y41ph). Can interact with lamin-B receptor (LBR). This interaction can contribute to the association of the heterochromatin with the inner nuclear membrane. Involved in the formation of functional kinetochore through interaction with MIS12 complex proteins. This chain is Chromobox protein homolog 5 (Cbx5), found in Mus musculus (Mouse).